The primary structure comprises 145 residues: SsrA-binding protein (145 aa).

Belongs to the SmpB family.

It is found in the cytoplasm. In terms of biological role, required for rescue of stalled ribosomes mediated by trans-translation. Binds to transfer-messenger RNA (tmRNA), required for stable association of tmRNA with ribosomes. tmRNA and SmpB together mimic tRNA shape, replacing the anticodon stem-loop with SmpB. tmRNA is encoded by the ssrA gene; the 2 termini fold to resemble tRNA(Ala) and it encodes a 'tag peptide', a short internal open reading frame. During trans-translation Ala-aminoacylated tmRNA acts like a tRNA, entering the A-site of stalled ribosomes, displacing the stalled mRNA. The ribosome then switches to translate the ORF on the tmRNA; the nascent peptide is terminated with the 'tag peptide' encoded by the tmRNA and targeted for degradation. The ribosome is freed to recommence translation, which seems to be the essential function of trans-translation. The sequence is that of SsrA-binding protein from Mesomycoplasma hyopneumoniae (strain 232) (Mycoplasma hyopneumoniae).